A 307-amino-acid polypeptide reads, in one-letter code: Mitochondrial brown fat uncoupling protein 1 (307 aa).

Residues 1 to 10 lie on the Mitochondrial intermembrane side of the membrane; sequence MVSSTTSEVQ. A helical transmembrane segment spans residues 11–32; sequence PTMGVKIFSAGVSACLADIITF. Solcar repeat units follow at residues 11-102, 111-201, and 210-295; these read PTMG…VQEY, ASLG…MKGA, and DDVP…LKKE. The Mitochondrial matrix portion of the chain corresponds to 33–73; that stretch reads PLDTAKVRLQIQGEGQASSTIRYKGVLGTITTLAKTEGLPK. Lys56 serves as a coordination point for fatty acid 16:0. The chain crosses the membrane as a helical span at residues 74 to 96; the sequence is LYSGLPAGIQRQISFASLRIGLY. Over 97–116 the chain is Mitochondrial intermembrane; that stretch reads DTVQEYFSSGRETPASLGSK. The chain crosses the membrane as a helical span at residues 117–133; that stretch reads ISAGLMTGGVAVFIGQP. At 134–178 the chain is on the mitochondrial matrix side; it reads TEVVKVRMQAQSHLHGIKPRYTGTYNAYRVIATTESLSTLWKGTT. A helical transmembrane segment spans residues 179 to 195; that stretch reads PNLMRNVIINCTELVTY. Residues 196-212 are Mitochondrial intermembrane-facing; that stretch reads DLMKGALVNHHILADDV. Residues 213–232 traverse the membrane as a helical segment; it reads PCHLLSALVAGFCTTLLASP. The Mitochondrial matrix segment spans residues 233-266; it reads VDVVKTRFINSLPGQYPSVPSCAMTMYTKEGPAA. Cys254 carries the cysteine sulfenic acid (-SOH) modification. A helical membrane pass occupies residues 267–289; that stretch reads FFKGFAPSFLRLGSWNVIMFVCF. Lys269 is a binding site for fatty acid 16:0. At 290–307 the chain is on the mitochondrial intermembrane side; sequence EQLKKELMKSRQTVDCTT.

Belongs to the mitochondrial carrier (TC 2.A.29) family. In terms of assembly, most probably functions as a monomer. Binds one purine nucleotide per monomer. However, has also been suggested to function as a homodimer or a homotetramer. Tightly associates with cardiolipin in the mitochondrion inner membrane; may stabilize and regulate its activity. Post-translationally, may undergo ubiquitin-mediated proteasomal degradation. May undergo sulfenylation upon cold exposure. May increase the sensitivity of UCP1 thermogenic function to the activation by noradrenaline probably through structural effects. Brown adipose tissue.

The protein resides in the mitochondrion inner membrane. It catalyses the reaction H(+)(in) = H(+)(out). Its activity is regulated as follows. Has no constitutive proton transporter activity and has to be activated by long-chain fatty acids/LCFAs. Inhibited by purine nucleotides. Both purine nucleotides and LCFAs bind the cytosolic side of the transporter and directly compete to activate or inhibit it. Activated by noradrenaline and reactive oxygen species. Despite lacking canonical translational encoding for selenocysteine, a small pool of the protein has been observed to selectively incorporate selenocysteine at 'Cys-254'. Selenocysteine-modified protein is highly sensitive to redox modification and may constitute a pool of protein highly sensitive to activation by elevated levels of reactive oxygen species (ROS). In terms of biological role, mitochondrial protein responsible for thermogenic respiration, a specialized capacity of brown adipose tissue and beige fat that participates in non-shivering adaptive thermogenesis to temperature and diet variations and more generally to the regulation of energy balance. Functions as a long-chain fatty acid/LCFA and proton symporter, simultaneously transporting one LCFA and one proton through the inner mitochondrial membrane. However, LCFAs remaining associated with the transporter via their hydrophobic tails, it results in an apparent transport of protons activated by LCFAs. Thereby, dissipates the mitochondrial proton gradient and converts the energy of substrate oxydation into heat instead of ATP. Regulates the production of reactive oxygen species/ROS by mitochondria. The polypeptide is Mitochondrial brown fat uncoupling protein 1 (Rattus norvegicus (Rat)).